The following is a 525-amino-acid chain: Bifunctional purine biosynthesis protein PurH (525 aa).

In terms of domain architecture, MGS-like spans 1–147 (MTKIERALIS…KNWAHVAIVT (147 aa)).

The protein belongs to the PurH family.

It carries out the reaction (6R)-10-formyltetrahydrofolate + 5-amino-1-(5-phospho-beta-D-ribosyl)imidazole-4-carboxamide = 5-formamido-1-(5-phospho-D-ribosyl)imidazole-4-carboxamide + (6S)-5,6,7,8-tetrahydrofolate. It catalyses the reaction IMP + H2O = 5-formamido-1-(5-phospho-D-ribosyl)imidazole-4-carboxamide. The protein operates within purine metabolism; IMP biosynthesis via de novo pathway; 5-formamido-1-(5-phospho-D-ribosyl)imidazole-4-carboxamide from 5-amino-1-(5-phospho-D-ribosyl)imidazole-4-carboxamide (10-formyl THF route): step 1/1. It participates in purine metabolism; IMP biosynthesis via de novo pathway; IMP from 5-formamido-1-(5-phospho-D-ribosyl)imidazole-4-carboxamide: step 1/1. The sequence is that of Bifunctional purine biosynthesis protein PurH from Chromobacterium violaceum (strain ATCC 12472 / DSM 30191 / JCM 1249 / CCUG 213 / NBRC 12614 / NCIMB 9131 / NCTC 9757 / MK).